A 211-amino-acid polypeptide reads, in one-letter code: ATP-dependent dethiobiotin synthetase BioD (211 aa).

Residue 13-18 participates in ATP binding; that stretch reads GVGKTV. T17 is a binding site for Mg(2+). Residue K33 is part of the active site. Residues C47 and E101 each coordinate Mg(2+). ATP is bound by residues 101 to 104, 185 to 187, and N192; these read EGAG and PWL.

It belongs to the dethiobiotin synthetase family. Homodimer. Mg(2+) serves as cofactor.

It is found in the cytoplasm. It carries out the reaction (7R,8S)-7,8-diammoniononanoate + CO2 + ATP = (4R,5S)-dethiobiotin + ADP + phosphate + 3 H(+). It participates in cofactor biosynthesis; biotin biosynthesis; biotin from 7,8-diaminononanoate: step 1/2. Catalyzes a mechanistically unusual reaction, the ATP-dependent insertion of CO2 between the N7 and N8 nitrogen atoms of 7,8-diaminopelargonic acid (DAPA, also called 7,8-diammoniononanoate) to form a ureido ring. The polypeptide is ATP-dependent dethiobiotin synthetase BioD (Bradyrhizobium diazoefficiens (strain JCM 10833 / BCRC 13528 / IAM 13628 / NBRC 14792 / USDA 110)).